Reading from the N-terminus, the 426-residue chain is Serine--tRNA ligase (426 aa).

Residue 231 to 233 (TSE) coordinates L-serine. 262–264 (RSE) is an ATP binding site. E285 contacts L-serine. Residue 349–352 (EISS) coordinates ATP. S385 contacts L-serine.

The protein belongs to the class-II aminoacyl-tRNA synthetase family. Type-1 seryl-tRNA synthetase subfamily. Homodimer. The tRNA molecule binds across the dimer.

It localises to the cytoplasm. The catalysed reaction is tRNA(Ser) + L-serine + ATP = L-seryl-tRNA(Ser) + AMP + diphosphate + H(+). The enzyme catalyses tRNA(Sec) + L-serine + ATP = L-seryl-tRNA(Sec) + AMP + diphosphate + H(+). Its pathway is aminoacyl-tRNA biosynthesis; selenocysteinyl-tRNA(Sec) biosynthesis; L-seryl-tRNA(Sec) from L-serine and tRNA(Sec): step 1/1. Catalyzes the attachment of serine to tRNA(Ser). Is also able to aminoacylate tRNA(Sec) with serine, to form the misacylated tRNA L-seryl-tRNA(Sec), which will be further converted into selenocysteinyl-tRNA(Sec). In Legionella pneumophila (strain Lens), this protein is Serine--tRNA ligase.